Reading from the N-terminus, the 338-residue chain is Phosphate acyltransferase (338 aa).

This sequence belongs to the PlsX family. Homodimer. Probably interacts with PlsY.

Its subcellular location is the cytoplasm. It carries out the reaction a fatty acyl-[ACP] + phosphate = an acyl phosphate + holo-[ACP]. The protein operates within lipid metabolism; phospholipid metabolism. Catalyzes the reversible formation of acyl-phosphate (acyl-PO(4)) from acyl-[acyl-carrier-protein] (acyl-ACP). This enzyme utilizes acyl-ACP as fatty acyl donor, but not acyl-CoA. The protein is Phosphate acyltransferase of Salinibacter ruber (strain DSM 13855 / M31).